Consider the following 475-residue polypeptide: Aspartyl/glutamyl-tRNA(Asn/Gln) amidotransferase subunit B (475 aa).

This sequence belongs to the GatB/GatE family. GatB subfamily. As to quaternary structure, heterotrimer of A, B and C subunits.

The catalysed reaction is L-glutamyl-tRNA(Gln) + L-glutamine + ATP + H2O = L-glutaminyl-tRNA(Gln) + L-glutamate + ADP + phosphate + H(+). It carries out the reaction L-aspartyl-tRNA(Asn) + L-glutamine + ATP + H2O = L-asparaginyl-tRNA(Asn) + L-glutamate + ADP + phosphate + 2 H(+). Its function is as follows. Allows the formation of correctly charged Asn-tRNA(Asn) or Gln-tRNA(Gln) through the transamidation of misacylated Asp-tRNA(Asn) or Glu-tRNA(Gln) in organisms which lack either or both of asparaginyl-tRNA or glutaminyl-tRNA synthetases. The reaction takes place in the presence of glutamine and ATP through an activated phospho-Asp-tRNA(Asn) or phospho-Glu-tRNA(Gln). The chain is Aspartyl/glutamyl-tRNA(Asn/Gln) amidotransferase subunit B from Pelodictyon phaeoclathratiforme (strain DSM 5477 / BU-1).